We begin with the raw amino-acid sequence, 81 residues long: ATP synthase subunit c, chloroplastic (81 aa).

A run of 2 helical transmembrane segments spans residues 3–23 (PLIP…ASIG) and 57–77 (LAFM…LLFA).

The protein belongs to the ATPase C chain family. F-type ATPases have 2 components, F(1) - the catalytic core - and F(0) - the membrane proton channel. F(1) has five subunits: alpha(3), beta(3), gamma(1), delta(1), epsilon(1). F(0) has four main subunits: a(1), b(1), b'(1) and c(10-14). The alpha and beta chains form an alternating ring which encloses part of the gamma chain. F(1) is attached to F(0) by a central stalk formed by the gamma and epsilon chains, while a peripheral stalk is formed by the delta, b and b' chains.

Its subcellular location is the plastid. It is found in the chloroplast thylakoid membrane. In terms of biological role, f(1)F(0) ATP synthase produces ATP from ADP in the presence of a proton or sodium gradient. F-type ATPases consist of two structural domains, F(1) containing the extramembraneous catalytic core and F(0) containing the membrane proton channel, linked together by a central stalk and a peripheral stalk. During catalysis, ATP synthesis in the catalytic domain of F(1) is coupled via a rotary mechanism of the central stalk subunits to proton translocation. Functionally, key component of the F(0) channel; it plays a direct role in translocation across the membrane. A homomeric c-ring of between 10-14 subunits forms the central stalk rotor element with the F(1) delta and epsilon subunits. The sequence is that of ATP synthase subunit c, chloroplastic from Cycas taitungensis (Prince sago).